A 150-amino-acid chain; its full sequence is Heavy metal-associated isoprenylated plant protein 24 (150 aa).

The 64-residue stretch at Q26–E89 folds into the HMA domain. The a metal cation site is built by C37 and C40. C147 carries the cysteine methyl ester modification. Residue C147 is the site of S-farnesyl cysteine attachment. The propeptide at A148–M150 is removed in mature form.

This sequence belongs to the HIPP family. Interacts with ZHD11/HB29.

Heavy-metal-binding protein. This chain is Heavy metal-associated isoprenylated plant protein 24, found in Arabidopsis thaliana (Mouse-ear cress).